Consider the following 1023-residue polypeptide: MGYGAGRDKYEPAATSEHGGKKGKGKGKDRDMEELKKEVTMEDHKMTLEELHRKYGTDLTRGLTTARAAEILARDGPNALTPPPTTPEWVKFCRQLFGGFSMLLWIGAILCFLAYGIRKASDLEPDNDNLYLGVVLSAVVIITGCFSYYQEAKSSRIMESFKNMVPQQALVIRNGEKLSINAENVVQGDLVEVKGGDRIPADLRIISAHGCKVDNSSLTGESEPQTRSPDFTNENPLETRNIAFFSTNCVEGTARGIVINTGDRTVMGRIATLASGLEGGQTPIAVEIGHFIHIITGVAVFLGVSFFILSLILHYTWLEAVIFLIGIIVANVPEGLLATVTVCLTLTAKRMARKNCLVKNLEAVETLGSTSTICSDKTGTLTQNRMTVAHMWFDNQIHEADTTENQSGASFDKSSPTWTALARIAGLCNRAVFPAGQENTPILKRDVVGDASESALLKCIELCCGSVKDMREKNQKVAEIPFNSTNKYQLSVHKNANPSESRYLLVMKGAPERILDRCSSILLQGKEQPLDEELKDAFQNAYLELGGLGERVLGFCHLLLDDEQFPDGFSFDTEDVNFPTEGLCFVGLISMIDPPRAAVPDRVGKCRSAGIKVIMVTGDHPITAKAIAKGVGIISEGNETVEDIAARLNIPVNQVNPRDAKACVIHGTDLKDMNADQIDDILRHHTEIVFARTSPQQKLIIVEGCQRQGAIVAVTGDGVNDSPALKKADIGIAMGIAGSDVSKQAADMILLDDNFASIVTGVEEGRLIFDNLKKSIAYTLTSNIPEITPFLIFIIADIPLPLGTVTILCIDLGTDMVPAISLAYEQAESDIMKRQPRNPKKDKLVNERLISMAYGQIGMIQALGGFFAYFVILAENGFLPSTLLGIRVAWEDRYVNDVEDSYGQQWTYEQRKIVEFTCHTAFFVSIVVVQWADLIICKTRRNSVFQQGMKNKILIFGLFEETALAAFLSYCPGMDVALRMYPLKPTWWFCAFPYSLLIFIYDEVRKLILRRSPGGWVEKETYY.

A propeptide spanning residues 1 to 5 (MGYGA) is cleaved from the precursor. The span at 1-11 (MGYGAGRDKYE) shows a compositional bias: basic and acidic residues. The tract at residues 1–34 (MGYGAGRDKYEPAATSEHGGKKGKGKGKDRDMEE) is disordered. Over 6-87 (GRDKYEPAAT…NALTPPPTTP (82 aa)) the chain is Cytoplasmic. Thr-15 carries the phosphothreonine; by PKC modification. Ser-16 carries the post-translational modification Phosphoserine; by PKC. The tract at residues 82-84 (PPP) is interaction with phosphoinositide-3 kinase. Residues 88 to 108 (EWVKFCRQLFGGFSMLLWIGA) form a helical membrane-spanning segment. The Extracellular portion of the chain corresponds to 109 to 131 (ILCFLAYGIRKASDLEPDNDNLY). Residues 132–152 (LGVVLSAVVIITGCFSYYQEA) traverse the membrane as a helical segment. Topologically, residues 153–288 (KSSRIMESFK…GGQTPIAVEI (136 aa)) are cytoplasmic. Positions 215-235 (NSSLTGESEPQTRSPDFTNEN) are disordered. A helical transmembrane segment spans residues 289 to 308 (GHFIHIITGVAVFLGVSFFI). The Extracellular segment spans residues 309–320 (LSLILHYTWLEA). A helical transmembrane segment spans residues 321 to 338 (VIFLIGIIVANVPEGLLA). The Cytoplasmic portion of the chain corresponds to 339–772 (TVTVCLTLTA…EEGRLIFDNL (434 aa)). The active-site 4-aspartylphosphate intermediate is Asp-376. Lys-487 contacts ATP. Mg(2+) contacts are provided by Asp-717 and Asp-721. Residues 773–792 (KKSIAYTLTSNIPEITPFLI) form a helical membrane-spanning segment. At 793–802 (FIIADIPLPL) the chain is on the extracellular side. Residues 803 to 823 (GTVTILCIDLGTDMVPAISLA) form a helical membrane-spanning segment. Residues 824-843 (YEQAESDIMKRQPRNPKKDK) lie on the Cytoplasmic side of the membrane. The chain crosses the membrane as a helical span at residues 844-866 (LVNERLISMAYGQIGMIQALGGF). At 867–918 (FAYFVILAENGFLPSTLLGIRVAWEDRYVNDVEDSYGQQWTYEQRKIVEFTC) the chain is on the extracellular side. A helical membrane pass occupies residues 919–938 (HTAFFVSIVVVQWADLIICK). The Cytoplasmic portion of the chain corresponds to 939–951 (TRRNSVFQQGMKN). The residue at position 943 (Ser-943) is a Phosphoserine; by PKA. The chain crosses the membrane as a helical span at residues 952–970 (KILIFGLFEETALAAFLSY). The Extracellular segment spans residues 971 to 985 (CPGMDVALRMYPLKP). The helical transmembrane segment at 986–1006 (TWWFCAFPYSLLIFIYDEVRK) threads the bilayer. Over 1007–1023 (LILRRSPGGWVEKETYY) the chain is Cytoplasmic.

It belongs to the cation transport ATPase (P-type) (TC 3.A.3) family. Type IIC subfamily. As to quaternary structure, the sodium/potassium-transporting ATPase is composed of a catalytic alpha subunit, an auxiliary non-catalytic beta subunit and an additional regulatory subunit. In terms of tissue distribution, mainly expressed in kidney. Found in bladder, colon, eye, and testis. Found in low levels in brain, heart, spleen and liver.

It is found in the cell membrane. Its subcellular location is the sarcolemma. The catalysed reaction is K(+)(out) + Na(+)(in) + ATP + H2O = K(+)(in) + Na(+)(out) + ADP + phosphate + H(+). With respect to regulation, this alpha subunit is resistant to ouabain. Functionally, this is the catalytic component of the active enzyme, which catalyzes the hydrolysis of ATP coupled with the exchange of sodium and potassium ions across the plasma membrane. This action creates the electrochemical gradient of sodium and potassium ions, providing the energy for active transport of various nutrients. This chain is Sodium/potassium-transporting ATPase subunit alpha-1 (ATP1A1), found in Rhinella marina (Cane toad).